The following is a 100-amino-acid chain: Large ribosomal subunit protein uL23 (100 aa).

This sequence belongs to the universal ribosomal protein uL23 family. Part of the 50S ribosomal subunit. Contacts protein L29, and trigger factor when it is bound to the ribosome.

Its function is as follows. One of the early assembly proteins it binds 23S rRNA. One of the proteins that surrounds the polypeptide exit tunnel on the outside of the ribosome. Forms the main docking site for trigger factor binding to the ribosome. The chain is Large ribosomal subunit protein uL23 from Yersinia pestis bv. Antiqua (strain Antiqua).